A 156-amino-acid chain; its full sequence is Myosin, essential light chain, adductor muscle (156 aa).

EF-hand domains are found at residues 6–43 (DEID…LGIN) and 81–116 (GTFA…LGER).

Its function is as follows. In molluscan muscle, calcium regulation is associated with myosin rather than with actin. Muscle myosin contains two types of light chains: the catalytic light chain, essential for ATPase activity, and the regulatory light chain, a calcium-binding protein responsible for Ca(2+) dependent binding and Ca(2+) dependent Mg-ATPase activity. The chain is Myosin, essential light chain, adductor muscle from Mizuhopecten yessoensis (Japanese scallop).